Here is a 109-residue protein sequence, read N- to C-terminus: Cell division protein ZapA (109 aa).

A coiled-coil region spans residues proline 21–glutamine 97.

Belongs to the ZapA family. Type 1 subfamily. Homodimer. Interacts with FtsZ.

The protein localises to the cytoplasm. In terms of biological role, activator of cell division through the inhibition of FtsZ GTPase activity, therefore promoting FtsZ assembly into bundles of protofilaments necessary for the formation of the division Z ring. It is recruited early at mid-cell but it is not essential for cell division. The protein is Cell division protein ZapA of Salmonella agona (strain SL483).